Here is a 148-residue protein sequence, read N- to C-terminus: Large ribosomal subunit protein eL19 (148 aa).

The span at 52 to 76 shows a compositional bias: basic residues; that stretch reads KPKKGISSYRSKKIAQQKKKGRRRG. The segment at 52–95 is disordered; it reads KPKKGISSYRSKKIAQQKKKGRRRGPGSIKGAKGARRPKKDEWM.

The protein belongs to the eukaryotic ribosomal protein eL19 family. In terms of assembly, part of the 50S ribosomal subunit.

Its function is as follows. Binds to the 23S rRNA. The polypeptide is Large ribosomal subunit protein eL19 (Methanothermobacter thermautotrophicus (strain ATCC 29096 / DSM 1053 / JCM 10044 / NBRC 100330 / Delta H) (Methanobacterium thermoautotrophicum)).